Here is a 495-residue protein sequence, read N- to C-terminus: Probable cytosol aminopeptidase (495 aa).

Positions 267 and 272 each coordinate Mn(2+). Lys-279 is a catalytic residue. Mn(2+) is bound by residues Asp-290, Asp-349, and Glu-351. The active site involves Arg-353.

The protein belongs to the peptidase M17 family. The cofactor is Mn(2+).

Its subcellular location is the cytoplasm. The catalysed reaction is Release of an N-terminal amino acid, Xaa-|-Yaa-, in which Xaa is preferably Leu, but may be other amino acids including Pro although not Arg or Lys, and Yaa may be Pro. Amino acid amides and methyl esters are also readily hydrolyzed, but rates on arylamides are exceedingly low.. It catalyses the reaction Release of an N-terminal amino acid, preferentially leucine, but not glutamic or aspartic acids.. Functionally, presumably involved in the processing and regular turnover of intracellular proteins. Catalyzes the removal of unsubstituted N-terminal amino acids from various peptides. This is Probable cytosol aminopeptidase from Histophilus somni (strain 2336) (Haemophilus somnus).